Reading from the N-terminus, the 270-residue chain is Undecaprenyl-diphosphatase 2 (270 aa).

8 consecutive transmembrane segments (helical) span residues 1-21 (MDLI…FLPV), 39-59 (QGLA…VWYF), 87-107 (WAVI…KGFI), 114-134 (PLVI…SDVV), 147-167 (LSWK…IPGT), 190-210 (FSFL…TLDL), 221-241 (AMGL…HFFL), and 247-267 (VGML…LVLF).

The protein belongs to the UppP family.

It localises to the cell inner membrane. The enzyme catalyses di-trans,octa-cis-undecaprenyl diphosphate + H2O = di-trans,octa-cis-undecaprenyl phosphate + phosphate + H(+). Functionally, catalyzes the dephosphorylation of undecaprenyl diphosphate (UPP). Confers resistance to bacitracin. This is Undecaprenyl-diphosphatase 2 from Stutzerimonas stutzeri (strain A1501) (Pseudomonas stutzeri).